A 459-amino-acid chain; its full sequence is Cysteine desulfurase (459 aa).

The N-terminal 17 residues, 1–17 (MVGSVAGNMLLRAAWRR), are a transit peptide targeting the mitochondrion. Pyridoxal 5'-phosphate contacts are provided by Ala129, Thr130, Gln237, Ser257, and His259. At Lys260 the chain carries N6-(pyridoxal phosphate)lysine. Thr297 serves as a coordination point for pyridoxal 5'-phosphate. Cys383 serves as the catalytic Cysteine persulfide intermediate. Residue Cys383 coordinates [2Fe-2S] cluster. Residue Cys383 coordinates Zn(2+). Cys383 is subject to Cysteine persulfide.

The protein belongs to the class-V pyridoxal-phosphate-dependent aminotransferase family. NifS/IscS subfamily. As to quaternary structure, homodimer. Component of the mitochondrial core iron-sulfur cluster (ISC) complex composed of NFS1, LYRM4, NDUFAB1, ISCU, FXN, and FDX2; this complex is a heterohexamer containing two copies of each monomer. Component of cyteine desulfurase complex composed of NFS1, LYRM4 and NDUFAB1; this complex contributes to the activation of cysteine desulfurase activity and NFS1 stabilization. Interacts (homodimer form) with ISCU (D-state); each monomer interacts with the C-terminal regions of each NFS1 monomer. Interacts with HSPA9. Interacts (via homodimer form) with FDX2. Interacts (via homodimer form) with FXN. Interacts with LYRM4. Component of a complex composed of FXN, NFS1, LYRM4 and ISCU. Requires pyridoxal 5'-phosphate as cofactor. N-gluconoylated. Post-translationally, cysteine persulfide intermediate is reduced by thiol-containing molecules like glutathione and L-cysteine. Persulfide reduction is a rate-limiting step of cysteine desulfurase catalytic cycle. As to expression, ubiquitous.

It localises to the mitochondrion. It carries out the reaction (sulfur carrier)-H + L-cysteine = (sulfur carrier)-SH + L-alanine. The enzyme catalyses L-cysteinyl-[cysteine desulfurase] + L-cysteine = S-sulfanyl-L-cysteinyl-[cysteine desulfurase] + L-alanine. With respect to regulation, active only in complex with LYRM4. Functionally, mitochondrial cysteine desulfurase, of the core iron-sulfur cluster (ISC) assembly complex, that catalyzes the desulfuration of L-cysteine to L-alanine, as component of the cysteine desulfurase complex, leading to the formation of a cysteine persulfide intermediate at the active site cysteine residue and participates in the [2Fe-2S] clusters assembly on the scaffolding protein ISCU. The persulfide is then transferred on the flexible Cys loop from the catalytic site of NFS1 to the surface of NFS1. After the NFS1-linked persulfide sulfur is transferred to one of the conserved Cys residues of the scaffold, a reaction assisted by FXN. The core iron-sulfur cluster (ISC) assembly complex is involved in the de novo synthesis of a [2Fe-2S] cluster, the first step of the mitochondrial iron-sulfur protein biogenesis. This process is initiated by the cysteine desulfurase complex (NFS1:LYRM4:NDUFAB1) that produces persulfide which is delivered on the scaffold protein ISCU in a FXN-dependent manner. Then this complex is stabilized by FDX2 which provides reducing equivalents to accomplish the [2Fe-2S] cluster assembly. Finally, the [2Fe-2S] cluster is transferred from ISCU to chaperone proteins, including HSCB, HSPA9 and GLRX5. The chain is Cysteine desulfurase from Mus musculus (Mouse).